We begin with the raw amino-acid sequence, 159 residues long: Lipoprotein LpqH (159 aa).

Positions 1–21 (MKRGLTVAVAGAAILVAGLSG) are cleaved as a signal peptide. Cys-22 is lipidated: N-palmitoyl cysteine. Residue Cys-22 is the site of S-diacylglycerol cysteine attachment. Residues 24–51 (SNKSTTGSGETTTAAGTTASPGAASGPK) are disordered. Residues 27–49 (STTGSGETTTAAGTTASPGAASG) are compositionally biased toward low complexity.

The protein belongs to the mycobacterial 19 kDa antigen family. In terms of processing, modified by Lgt on Cys-22 with an S-linked diacylglycerol with a mixture of C16, C18 and C19 fatty acids, signal peptide is removed by LspA, modifed by Lnt with an amide-linked mixture of C16 and C19 fatty acids.

The protein localises to the cell membrane. Might be involved in ligand transport. A host TLR2 agonist, modifies host gene expression in response to pathogen. This is Lipoprotein LpqH (lpqH) from Mycobacterium tuberculosis (strain CDC 1551 / Oshkosh).